Reading from the N-terminus, the 152-residue chain is UPF0266 membrane protein YobD (152 aa).

Over 1–5 (MTITD) the chain is Periplasmic. Residues 6–26 (LVLILFIAALLAYALYDQFIM) traverse the membrane as a helical segment. Over 27-44 (PRRNGPTLLSIALLRRGR) the chain is Cytoplasmic. A helical membrane pass occupies residues 45-65 (IDSVIFVGLVAILIYNNVTSH). A topological domain (periplasmic) is located at residue Gly-66. Residues 67–87 (AQMTTWLLSALALMGFYIFWI) traverse the membrane as a helical segment. The Cytoplasmic segment spans residues 88 to 152 (RTPRIIFKQR…KIYKLLIENQ (65 aa)).

It belongs to the UPF0266 family.

It localises to the cell inner membrane. This Salmonella typhi protein is UPF0266 membrane protein YobD (yobD).